The primary structure comprises 131 residues: Profilin (131 aa).

It belongs to the profilin family. In terms of assembly, occurs in many kinds of cells as a complex with monomeric actin in a 1:1 ratio.

The protein localises to the cytoplasm. Its subcellular location is the cytoskeleton. In terms of biological role, binds to actin and affects the structure of the cytoskeleton. At high concentrations, profilin prevents the polymerization of actin, whereas it enhances it at low concentrations. By binding to PIP2, it inhibits the formation of IP3 and DG. This is Profilin from Chenopodium album (Fat hen).